Reading from the N-terminus, the 298-residue chain is Acetylglutamate kinase (298 aa).

Substrate contacts are provided by residues 73–74, arginine 95, and asparagine 188; that span reads GG.

Belongs to the acetylglutamate kinase family. ArgB subfamily.

It localises to the cytoplasm. The enzyme catalyses N-acetyl-L-glutamate + ATP = N-acetyl-L-glutamyl 5-phosphate + ADP. It functions in the pathway amino-acid biosynthesis; L-arginine biosynthesis; N(2)-acetyl-L-ornithine from L-glutamate: step 2/4. Its function is as follows. Catalyzes the ATP-dependent phosphorylation of N-acetyl-L-glutamate. The polypeptide is Acetylglutamate kinase (Nostoc punctiforme (strain ATCC 29133 / PCC 73102)).